Here is a 113-residue protein sequence, read N- to C-terminus: MATASPTRTKMRIRKGDTVQVIAGKDKGKTGEVLRTLPWENRVVVQGVNLRTRHVKPAQEGESGRIVTEEASLHASNVMVYSTDKKVASRVEIVVDKDGNKKRKLKKTGELLD.

The protein belongs to the universal ribosomal protein uL24 family. Part of the 50S ribosomal subunit.

Its function is as follows. One of two assembly initiator proteins, it binds directly to the 5'-end of the 23S rRNA, where it nucleates assembly of the 50S subunit. In terms of biological role, one of the proteins that surrounds the polypeptide exit tunnel on the outside of the subunit. The chain is Large ribosomal subunit protein uL24 from Synechococcus sp. (strain RCC307).